We begin with the raw amino-acid sequence, 148 residues long: Large ribosomal subunit protein bL9 (148 aa).

This sequence belongs to the bacterial ribosomal protein bL9 family.

In terms of biological role, binds to the 23S rRNA. This is Large ribosomal subunit protein bL9 from Staphylococcus aureus (strain bovine RF122 / ET3-1).